Consider the following 561-residue polypeptide: SUN domain-containing protein 5 (561 aa).

A helical membrane pass occupies residues 36–56 (GSFFERSISLVLLLWCFLFLV). The SUN domain occupies 158 to 318 (NGSSQLVNNG…SVVEVFGIDA (161 aa)). The disordered stretch occupies residues 345–367 (ADEKQDGEIKSNRTDQIGKETEA). A coiled-coil region spans residues 454 to 499 (MEKELRDLELWKTLVASRVESLARGNSALRLDVEKIVKEQANLESK). 2 helical membrane-spanning segments follow: residues 501–521 (LGVL…LVST) and 540–560 (PDSG…IHLL).

As to quaternary structure, forms homomers. Interacts with SUN3 and TIK.

It is found in the membrane. Functionally, encodes a member of the mid-SUN subfamily of SUN-domain proteins. It is involved in early seed development and nuclear morphology. [TAIR]. The sequence is that of SUN domain-containing protein 5 from Arabidopsis thaliana (Mouse-ear cress).